Reading from the N-terminus, the 341-residue chain is Fructose-1,6-bisphosphatase, cytosolic (341 aa).

Mg(2+) is bound by residues Glu-71, Glu-100, Asp-121, Leu-123, and Asp-124. Substrate is bound by residues 124 to 127 (DGSS), Asn-215, Tyr-247, Tyr-267, and Lys-277. Residue Glu-283 participates in Mg(2+) binding.

Belongs to the FBPase class 1 family. The cofactor is Mg(2+).

The protein resides in the cytoplasm. It is found in the nucleus. It carries out the reaction beta-D-fructose 1,6-bisphosphate + H2O = beta-D-fructose 6-phosphate + phosphate. Functionally, catalyzes the first irreversible reaction from fructose-1,6-bisphosphate to fructose-6-phosphate and inorganic phosphate and plays an important regulatory role in sucrose biosynthesis and metabolism. Its activity is essential to regulate starch levels. Functions in fructose-mediated signaling independently of its catalytic activity in sugar metabolism. May act downstream of ABA2/GIN1, which is involved in abscisic acid (ABA) synthesis to regulate autotrophic transition and modulate early seedling establishment after seed germination. This is Fructose-1,6-bisphosphatase, cytosolic from Arabidopsis thaliana (Mouse-ear cress).